The primary structure comprises 267 residues: GTP cyclohydrolase MptA (267 aa).

The protein belongs to the GTP cyclohydrolase IV family. Homodimer. The cofactor is Fe(2+).

The enzyme catalyses GTP + H2O = 7,8-dihydroneopterin 2',3'-cyclic phosphate + formate + diphosphate + H(+). The protein operates within cofactor biosynthesis; 5,6,7,8-tetrahydromethanopterin biosynthesis. Functionally, converts GTP to 7,8-dihydro-D-neopterin 2',3'-cyclic phosphate, the first intermediate in the biosynthesis of coenzyme methanopterin. The polypeptide is GTP cyclohydrolase MptA (Pyrococcus furiosus (strain ATCC 43587 / DSM 3638 / JCM 8422 / Vc1)).